We begin with the raw amino-acid sequence, 590 residues long: UvrABC system protein C (590 aa).

The GIY-YIG domain maps to aspartate 14–valine 91. Residues glutamine 196 to threonine 231 enclose the UVR domain.

Belongs to the UvrC family. In terms of assembly, interacts with UvrB in an incision complex.

Its subcellular location is the cytoplasm. Its function is as follows. The UvrABC repair system catalyzes the recognition and processing of DNA lesions. UvrC both incises the 5' and 3' sides of the lesion. The N-terminal half is responsible for the 3' incision and the C-terminal half is responsible for the 5' incision. This Bacillus pumilus (strain SAFR-032) protein is UvrABC system protein C.